The primary structure comprises 303 residues: Probable cell division protein WhiA (303 aa).

A DNA-binding region (H-T-H motif) is located at residues Ser-272 to Leu-303.

The protein belongs to the WhiA family.

In terms of biological role, involved in cell division and chromosome segregation. This Streptococcus pneumoniae serotype 4 (strain ATCC BAA-334 / TIGR4) protein is Probable cell division protein WhiA.